The primary structure comprises 213 residues: MGNGKEEDYNFVFKVVLIGESGVGKTNLLSRFTRNEFSHDSRTTIGVEFSTRTVLLGTAAVKAQIWDTAGLERYRAITSAYYRGAVGALLVFDLTKHQTYAVVERWLKELYDHAEATIVVMLVGNKSDLSQAREVPTEEARMFAENNGLLFLETSALDSTNVELAFETVLKEIFAKVSKQIQNSPRSNAIALGSAQAGQEPGPGQKRACCINL.

Residues Ser21, Gly24, Lys25, Thr26, Asn27, Ser38, His39, Thr43, and Thr44 each coordinate GTP. Residue Thr26 participates in Mg(2+) binding. 2 consecutive short sequence motifs (switch) follow at residues 35–49 (NEFS…GVEF) and 67–84 (DTAG…YYRG). Mg(2+) is bound by residues Thr44 and Asp67. The GTP site is built by Gly70, Asn125, Lys126, Asp128, Ala156, and Leu157. Residues Cys209 and Cys210 are each lipidated (S-geranylgeranyl cysteine). At Cys210 the chain carries Cysteine methyl ester. Positions 211–213 (INL) are cleaved as a propeptide — removed in mature form.

Belongs to the small GTPase superfamily. Rab family. In terms of assembly, interacts (GTP-bound form) with RAB11FIP1, RAB11FIP2, RAB11FIP3 and RAB11FIP4. Interacts (via the hypervariable C-terminal region) with ITGB1 (via the cytoplasmic region); the interaction is GTP-dependent. Interacts with ITGAV. Associates with the integrin alpha-V/beta-1 heterodimer. Interacts with VPS33B. The cofactor is Mg(2+). As to expression, expression is restricted to epithelial cells. Expressed in the gastrointestinal mucosa, (highest expression seen in the ileum and colon), kidney, and lung. A very minor and variable level of expression is seen in the splenic tissue.

Its subcellular location is the cell membrane. It localises to the cell projection. The protein localises to the pseudopodium membrane. It is found in the cytoplasmic vesicle. The catalysed reaction is GTP + H2O = GDP + phosphate + H(+). Regulated by guanine nucleotide exchange factors (GEFs) which promote the exchange of bound GDP for free GTP. Regulated by GTPase activating proteins (GAPs) which increase the GTP hydrolysis activity. Inhibited by GDP dissociation inhibitors (GDIs) which prevent Rab-GDP dissociation. In terms of biological role, the small GTPases Rab are key regulators of intracellular membrane trafficking, from the formation of transport vesicles to their fusion with membranes. Rabs cycle between an inactive GDP-bound form and an active GTP-bound form that is able to recruit to membranes different set of downstream effectors directly responsible for vesicle formation, movement, tethering and fusion. RAB25 regulates epithelial cell differentiation, proliferation and survival, thereby playing key roles in tumorigenesis. Promotes invasive migration of cells in which it functions to localize and maintain integrin alpha-V/beta-1 at the tips of extending pseudopodia. Involved in the regulation of epithelial morphogenesis through the control of CLDN4 expression and localization at tight junctions. May selectively regulate the apical recycling pathway. Together with MYO5B regulates transcytosis. This chain is Ras-related protein Rab-25 (RAB25), found in Oryctolagus cuniculus (Rabbit).